The chain runs to 172 residues: MSVKSILTEPNKLLRQISKPVENVGDEERRLMDDMLDTMYAAPGIGLAAIQIGVPKRIIVMDISRDEDKKEPRYFVNPVIKNKNDITSKYEEGCLSVPDQFAEIERPNECEVEYLDYNGKKQLLKADGLLATCIQHEMDHLEGVLFIDYLSKLKKSMIIKKLSKIKSNRIIV.

Fe cation-binding residues include Cys-94 and His-136. The active site involves Glu-137. A Fe cation-binding site is contributed by His-140.

The protein belongs to the polypeptide deformylase family. Fe(2+) serves as cofactor.

The enzyme catalyses N-terminal N-formyl-L-methionyl-[peptide] + H2O = N-terminal L-methionyl-[peptide] + formate. Functionally, removes the formyl group from the N-terminal Met of newly synthesized proteins. Requires at least a dipeptide for an efficient rate of reaction. N-terminal L-methionine is a prerequisite for activity but the enzyme has broad specificity at other positions. The protein is Peptide deformylase of Pelagibacter ubique (strain HTCC1062).